The following is a 367-amino-acid chain: Probable butyrate kinase (367 aa).

It belongs to the acetokinase family.

The protein resides in the cytoplasm. The catalysed reaction is butanoate + ATP = butanoyl phosphate + ADP. This chain is Probable butyrate kinase, found in Bacillus cytotoxicus (strain DSM 22905 / CIP 110041 / 391-98 / NVH 391-98).